The chain runs to 426 residues: Proline--tRNA ligase (426 aa).

Belongs to the class-II aminoacyl-tRNA synthetase family. ProS type 2 subfamily. In terms of assembly, homodimer.

It is found in the cytoplasm. It carries out the reaction tRNA(Pro) + L-proline + ATP = L-prolyl-tRNA(Pro) + AMP + diphosphate. In terms of biological role, catalyzes the attachment of proline to tRNA(Pro) in a two-step reaction: proline is first activated by ATP to form Pro-AMP and then transferred to the acceptor end of tRNA(Pro). This chain is Proline--tRNA ligase, found in Rickettsia rickettsii (strain Iowa).